We begin with the raw amino-acid sequence, 572 residues long: Cleavage stimulation factor subunit 2 (572 aa).

Phosphoserine is present on Ser14. The region spanning Arg16 to Ser94 is the RRM domain. The segment at Ala108–Ala248 is interactions with CSTF3 and SYMPK. Residue Lys189 forms a Glycyl lysine isopeptide (Lys-Gly) (interchain with G-Cter in SUMO2) linkage. The segment at Val208–Gln230 is disordered. Omega-N-methylarginine is present on Arg308. The tract at residues Leu322–Pro382 is disordered. Residues Pro360 to Arg373 are compositionally biased toward basic and acidic residues. The 1; approximate repeat unit spans residues Ile410–Ala414. Residues Ile410–Gly464 form an 11 X 5 AA tandem repeats of M-E-A-R-[AG] region. Repeat unit 2 spans residues Met415–Gly419. One copy of the 3; approximate repeat lies at Leu420–Gly424. One copy of the 4; approximate repeat lies at Leu425–Ala429. Repeat copies occupy residues Met430–Ala434, Met435–Ala439, Met440–Ala444, and Met445–Ala449. Residues Met450–Gly454 form a 9; approximate repeat. Repeat unit 10 spans residues Met455–Ser459. One copy of the 11; approximate repeat lies at Met460–Gly464. Arg463 and Arg470 each carry omega-N-methylarginine. The interval Ile509–Pro572 is interaction with RPO2TC1. Ser519 is subject to Phosphoserine.

As to quaternary structure, the CSTF complex is composed of CSTF1 (50 kDa subunit), CSTF2 (64 kDa subunit) and CSTF3 (77 kDa subunit). CSTF2 directly interacts with CSTF3, SYMPK and RPO2TC1. Interacts with HSF1 in heat-stressed cells. Interacts with CPSF2, CPSF3 and FIP1L1. Interacts with DDX1.

The protein resides in the nucleus. In terms of biological role, one of the multiple factors required for polyadenylation and 3'-end cleavage of mammalian pre-mRNAs. This subunit is directly involved in the binding to pre-mRNAs. The polypeptide is Cleavage stimulation factor subunit 2 (CSTF2) (Bos taurus (Bovine)).